We begin with the raw amino-acid sequence, 261 residues long: Global transcriptional regulator CodY (261 aa).

The GAF domain stretch occupies residues 1–159 (MPNLLEKTRK…ASTVVGIQLL (159 aa)). Positions 207 to 226 (ASVIADRIGITRSVIVNALR) form a DNA-binding region, H-T-H motif.

It belongs to the CodY family.

It is found in the cytoplasm. Functionally, DNA-binding global transcriptional regulator which is involved in the adaptive response to starvation and acts by directly or indirectly controlling the expression of numerous genes in response to nutrient availability. During rapid exponential growth, CodY is highly active and represses genes whose products allow adaptation to nutrient depletion. The polypeptide is Global transcriptional regulator CodY (Streptococcus agalactiae serotype Ia (strain ATCC 27591 / A909 / CDC SS700)).